Here is a 384-residue protein sequence, read N- to C-terminus: 1-deoxy-D-xylulose 5-phosphate reductoisomerase (384 aa).

Thr10, Gly11, Ser12, Ile13, Gly36, Asn38, and Asn122 together coordinate NADPH. Lys123 provides a ligand contact to 1-deoxy-D-xylulose 5-phosphate. Glu124 contacts NADPH. Asp148 contributes to the Mn(2+) binding site. The 1-deoxy-D-xylulose 5-phosphate site is built by Ser149, Glu150, Ser174, and His197. Glu150 provides a ligand contact to Mn(2+). Gly203 contacts NADPH. 1-deoxy-D-xylulose 5-phosphate is bound by residues Ser210, Asn215, Lys216, and Glu219. Residue Glu219 coordinates Mn(2+).

The protein belongs to the DXR family. The cofactor is Mg(2+). Mn(2+) is required as a cofactor.

It carries out the reaction 2-C-methyl-D-erythritol 4-phosphate + NADP(+) = 1-deoxy-D-xylulose 5-phosphate + NADPH + H(+). It participates in isoprenoid biosynthesis; isopentenyl diphosphate biosynthesis via DXP pathway; isopentenyl diphosphate from 1-deoxy-D-xylulose 5-phosphate: step 1/6. Its function is as follows. Catalyzes the NADPH-dependent rearrangement and reduction of 1-deoxy-D-xylulose-5-phosphate (DXP) to 2-C-methyl-D-erythritol 4-phosphate (MEP). This is 1-deoxy-D-xylulose 5-phosphate reductoisomerase from Geotalea daltonii (strain DSM 22248 / JCM 15807 / FRC-32) (Geobacter daltonii).